The sequence spans 226 residues: PtdIns3K complex I subunit atg38 (226 aa).

Serine 2 is modified (N-acetylserine). Coiled coils occupy residues 52 to 85 (DVTQAIDLLKQDITAKIQELELLIEKQSSEENNI) and 182 to 209 (FKEYGMKIDEITKENKKLANEIGRLRER).

This sequence belongs to the ATG38 family. As to quaternary structure, homodimer. Component of the autophagy-specific VPS34 PI3-kinase complex I composed of VPS15, VPS30, VPS34, ATG14 and an ATG38 homodimer. Interacts directly with ATG14 and VPS34.

Its subcellular location is the cytoplasm. The protein resides in the preautophagosomal structure membrane. Its function is as follows. Autophagy-related protein required for cytoplasm to vacuole transport (Cvt) and autophagy as a part of the autophagy-specific VPS34 PI3-kinase complex I. This complex is essential to recruit the ATG8-phosphatidylinositol conjugate and the ATG12-ATG5 conjugate to the pre-autophagosomal structure. ATG38 is required for the integrity of the active PI3-kinase complex I by maintaining an association between VPS15-VPS34 and ATG14-VPS30 subcomplexes. This is PtdIns3K complex I subunit atg38 from Saccharomyces cerevisiae (strain ATCC 204508 / S288c) (Baker's yeast).